The sequence spans 185 residues: MNHQAKRLWIEPIKGSRRKSNFFFASIILGGALGFLLVGFSSYIGRNLVPPLLSHQILFVPQGIVMCFYGIAGLFFSSYLWCTILFNVGGGYNKIMKKKEFYVFFAGVSQGKIVVFFLRVPLKNVQTIKMEVQESLFYSRHVLYMKVKGLPDIPLARTGDHFNLSEMEQKAAELAHFLRVSIEGF.

3 consecutive transmembrane segments (helical) span residues 22 to 42, 57 to 77, and 101 to 121; these read FFFA…GFSS, ILFV…LFFS, and FYVF…LRVP.

This sequence belongs to the Ycf4 family.

It localises to the plastid. Its subcellular location is the chloroplast thylakoid membrane. Functionally, seems to be required for the assembly of the photosystem I complex. The chain is Photosystem I assembly protein Ycf4 from Gnetum parvifolium (Small-leaved jointfir).